We begin with the raw amino-acid sequence, 276 residues long: F-actin-capping protein subunit alpha (276 aa).

Belongs to the F-actin-capping protein alpha subunit family. Heterodimer of an alpha and a beta subunit.

Its subcellular location is the cytoplasm. It is found in the cytoskeleton. F-actin-capping proteins bind in a Ca(2+)-independent manner to the fast growing ends of actin filaments (barbed end) thereby blocking the exchange of subunits at these ends. Unlike other capping proteins (such as gelsolin and severin), these proteins do not sever actin filaments. The polypeptide is F-actin-capping protein subunit alpha (cap1) (Aspergillus fumigatus (strain ATCC MYA-4609 / CBS 101355 / FGSC A1100 / Af293) (Neosartorya fumigata)).